A 115-amino-acid polypeptide reads, in one-letter code: UPF0738 protein SH1953 (115 aa).

It belongs to the UPF0738 family.

The chain is UPF0738 protein SH1953 from Staphylococcus haemolyticus (strain JCSC1435).